Consider the following 469-residue polypeptide: ABHD16B (469 aa).

One can recognise an AB hydrolase-1 domain in the interval 174–298 (VICCEGNAGF…GLVVRTVREH (125 aa)). Catalysis depends on charge relay system residues S247, D322, and H418.

Belongs to the AB hydrolase superfamily. ABHD16 family.

It catalyses the reaction a 1,2-diacyl-sn-glycero-3-phospho-L-serine + H2O = a 2-acyl-sn-glycero-3-phospho-L-serine + a fatty acid + H(+). It carries out the reaction a 1-acylglycerol + H2O = glycerol + a fatty acid + H(+). The catalysed reaction is 1-(9Z-octadecenoyl)-glycerol + H2O = glycerol + (9Z)-octadecenoate + H(+). Functionally, hydrolyzes the sn-1 position of glycerophospholipids with high specificity towards phosphatidylserine (PS), PS-PLA1 enzyme. Also hydrolyzes the acyl chain of glycerolipids with a preference for the monoacylglycerol (MAG) 1-acylglycerol, MAG lipase. Plays a regulatory role in cellular lipid homeostasis by modulating genes involved in neutral lipid degradation and in phospholipid synthesis and composition. This chain is ABHD16B, found in Homo sapiens (Human).